The following is a 382-amino-acid chain: Chorismate synthase (382 aa).

2 residues coordinate NADP(+): Arg-39 and Arg-45. FMN contacts are provided by residues 127–129 (RAS), 245–246 (QA), Gly-290, 305–309 (KPIPT), and Arg-331.

It belongs to the chorismate synthase family. In terms of assembly, homotetramer. Requires FMNH2 as cofactor.

It carries out the reaction 5-O-(1-carboxyvinyl)-3-phosphoshikimate = chorismate + phosphate. It functions in the pathway metabolic intermediate biosynthesis; chorismate biosynthesis; chorismate from D-erythrose 4-phosphate and phosphoenolpyruvate: step 7/7. Its function is as follows. Catalyzes the anti-1,4-elimination of the C-3 phosphate and the C-6 proR hydrogen from 5-enolpyruvylshikimate-3-phosphate (EPSP) to yield chorismate, which is the branch point compound that serves as the starting substrate for the three terminal pathways of aromatic amino acid biosynthesis. This reaction introduces a second double bond into the aromatic ring system. This chain is Chorismate synthase, found in Desulfitobacterium hafniense (strain Y51).